Reading from the N-terminus, the 148-residue chain is Large ribosomal subunit protein uL13 (148 aa).

Belongs to the universal ribosomal protein uL13 family. Part of the 50S ribosomal subunit.

In terms of biological role, this protein is one of the early assembly proteins of the 50S ribosomal subunit, although it is not seen to bind rRNA by itself. It is important during the early stages of 50S assembly. This is Large ribosomal subunit protein uL13 from Sulfolobus acidocaldarius (strain ATCC 33909 / DSM 639 / JCM 8929 / NBRC 15157 / NCIMB 11770).